A 438-amino-acid chain; its full sequence is Dol-P-Man:Man(5)GlcNAc(2)-PP-Dol alpha-1,3-mannosyltransferase (438 aa).

A Phosphoserine modification is found at Ser13. The next 11 membrane-spanning stretches (helical) occupy residues 41–61 (YTLLVAACLCLAEVGITFWVI), 95–115 (TGPLVYPAGFVYIFMGLYYAT), 123–143 (MAQNIFAVLYLATLLLVFLIY), 149–169 (VPPFVFFFMCCASYRVHSIFV), 172–192 (LFNDPVAMVLLFLSINLLLAQ), 203–223 (LAVSVKMNVLLFAPGLLFLLL), 231–251 (ALPKLGICAGLQVVLGLPFLL), 289–309 (FHLALLTAHLTLLLLFALCRW), 332–352 (PLTPNQIVSTLFTSNFIGICF), 356–376 (LHYQFYVWYFHTLPYLLWAMP), and 407–427 (AALHICHAVILLQLWLGPQPF).

The protein belongs to the glycosyltransferase ALG3 family.

Its subcellular location is the endoplasmic reticulum membrane. The catalysed reaction is an alpha-D-Man-(1-&gt;2)-alpha-D-Man-(1-&gt;2)-alpha-D-Man-(1-&gt;3)-[alpha-D-Man-(1-&gt;6)]-beta-D-Man-(1-&gt;4)-beta-D-GlcNAc-(1-&gt;4)-alpha-D-GlcNAc-diphospho-di-trans,poly-cis-dolichol + a di-trans,poly-cis-dolichyl beta-D-mannosyl phosphate = an alpha-D-Man-(1-&gt;2)-alpha-D-Man-(1-&gt;2)-alpha-D-Man-(1-&gt;3)-[alpha-D-Man-(1-&gt;3)-alpha-D-Man-(1-&gt;6)]-beta-D-Man-(1-&gt;4)-beta-D-GlcNAc-(1-&gt;4)-alpha-D-GlcNAc-diphospho-di-trans,poly-cis-dolichol + a di-trans,poly-cis-dolichyl phosphate + H(+). Its pathway is protein modification; protein glycosylation. Its function is as follows. Dol-P-Man:Man(5)GlcNAc(2)-PP-Dol alpha-1,3-mannosyltransferase that operates in the biosynthetic pathway of dolichol-linked oligosaccharides, the glycan precursors employed in protein asparagine (N)-glycosylation. The assembly of dolichol-linked oligosaccharides begins on the cytosolic side of the endoplasmic reticulum membrane and finishes in its lumen. The sequential addition of sugars to dolichol pyrophosphate produces dolichol-linked oligosaccharides containing fourteen sugars, including two GlcNAcs, nine mannoses and three glucoses. Once assembled, the oligosaccharide is transferred from the lipid to nascent proteins by oligosaccharyltransferases. In the lumen of the endoplasmic reticulum, adds the first dolichyl beta-D-mannosyl phosphate derived mannose in an alpha-1,3 linkage to Man(5)GlcNAc(2)-PP-dolichol to produce Man(6)GlcNAc(2)-PP-dolichol. Man(6)GlcNAc(2)-PP-dolichol is a substrate for ALG9, the following enzyme in the biosynthetic pathway. The protein is Dol-P-Man:Man(5)GlcNAc(2)-PP-Dol alpha-1,3-mannosyltransferase of Homo sapiens (Human).